Here is a 303-residue protein sequence, read N- to C-terminus: Histone deacetylase HDT2 (303 aa).

The segment covering 100–112 (EMDLDSEDEEEEL) has biased composition (acidic residues). Residues 100-282 (EMDLDSEDEE…SGGSVPCKSC (183 aa)) form a disordered region. Basic and acidic residues predominate over residues 119–133 (ENGKADGKEEQKNQE). A compositionally biased stretch (acidic residues) spans 154 to 203 (DSDDSDEDESDDSDEDDSDDSDEGEGLSPDEGDDDSSDEDDTSDDDEEET). A compositionally biased stretch (basic and acidic residues) spans 204 to 217 (PTPKKPEAGKKRGA). The C2H2-type zinc finger occupies 277-300 (VPCKSCSKTFNSEMALQAHSKAKH).

This sequence belongs to the histone deacetylase HD2 family. Multimer. Possibly forms a homotrimer with HDT1 and/or HDT3.

It is found in the nucleus. Its subcellular location is the nucleolus. Mediates the deacetylation of lysine residues on the N-terminal part of the core histones (H2A, H2B, H3 and H4). Histone deacetylation gives a tag for epigenetic repression and plays an important role in transcriptional regulation, cell cycle progression and developmental events. This chain is Histone deacetylase HDT2 (HDT2), found in Zea mays (Maize).